The chain runs to 215 residues: Adenylate kinase (215 aa).

Residue 10-15 (GAGKGT) participates in ATP binding. The NMP stretch occupies residues 30 to 59 (STGDMLRAAVKAGTELGLKAKSVMDSGGLV). Residues Thr-31, Arg-36, 57–59 (GLV), 85–88 (GFPR), and Gln-92 contribute to the AMP site. The segment at 122–159 (GRRVHEASGRVYHTVYNPPKIAGKDDITGEDLVQRKDD) is LID. ATP contacts are provided by residues Arg-123 and 132 to 133 (VY). Arg-156 and Arg-167 together coordinate AMP. An ATP-binding site is contributed by Gly-201.

Belongs to the adenylate kinase family. In terms of assembly, monomer.

The protein localises to the cytoplasm. It catalyses the reaction AMP + ATP = 2 ADP. It functions in the pathway purine metabolism; AMP biosynthesis via salvage pathway; AMP from ADP: step 1/1. Its function is as follows. Catalyzes the reversible transfer of the terminal phosphate group between ATP and AMP. Plays an important role in cellular energy homeostasis and in adenine nucleotide metabolism. This Pseudomonas fluorescens (strain ATCC BAA-477 / NRRL B-23932 / Pf-5) protein is Adenylate kinase.